Here is a 212-residue protein sequence, read N- to C-terminus: COP9 signalosome complex subunit 8 (212 aa).

In terms of domain architecture, PCI spans 26-193 (TSLSAYEEQA…KPVVTAPPKD (168 aa)).

The protein belongs to the CSN8 family. Component of the COP9 signalosome (CSN) complex.

The protein resides in the cytoplasm. It is found in the nucleus. Functionally, component of the COP9 signalosome (CSN) complex that acts as an regulator of the ubiquitin (Ubl) conjugation pathway by mediating the deneddylation of the cullin subunit of SCF-type E3 ubiquitin-protein ligase complexes. The CSN complex seems to link protein degradation to sexual development. The polypeptide is COP9 signalosome complex subunit 8 (csnH) (Emericella nidulans (strain FGSC A4 / ATCC 38163 / CBS 112.46 / NRRL 194 / M139) (Aspergillus nidulans)).